The sequence spans 92 residues: Small ribosomal subunit protein uS19 (92 aa).

The protein belongs to the universal ribosomal protein uS19 family.

In terms of biological role, protein S19 forms a complex with S13 that binds strongly to the 16S ribosomal RNA. The protein is Small ribosomal subunit protein uS19 of Corynebacterium efficiens (strain DSM 44549 / YS-314 / AJ 12310 / JCM 11189 / NBRC 100395).